Here is a 155-residue protein sequence, read N- to C-terminus: 3-hydroxyacyl-[acyl-carrier-protein] dehydratase FabZ (155 aa).

Residue histidine 58 is part of the active site.

The protein belongs to the thioester dehydratase family. FabZ subfamily.

It localises to the cytoplasm. It carries out the reaction a (3R)-hydroxyacyl-[ACP] = a (2E)-enoyl-[ACP] + H2O. Involved in unsaturated fatty acids biosynthesis. Catalyzes the dehydration of short chain beta-hydroxyacyl-ACPs and long chain saturated and unsaturated beta-hydroxyacyl-ACPs. This chain is 3-hydroxyacyl-[acyl-carrier-protein] dehydratase FabZ, found in Rhizobium etli (strain CIAT 652).